The sequence spans 159 residues: Transmembrane protein 89 (159 aa).

Residues 1 to 24 form the signal peptide; that stretch reads MLHVLASLPLLLLLVTSASTHAWS. Topologically, residues 25-63 are extracellular; sequence RPLWYQVGLDLQPWGCQPKSVEGCRGGLSCPGYWLGPGA. The chain crosses the membrane as a helical span at residues 64 to 86; the sequence is SRIYPVAAVMITTTMLMICRKIL. Topologically, residues 87–159 are cytoplasmic; that stretch reads QGRRRSQATK…QIKGTSTQSG (73 aa). A disordered region spans residues 91 to 110; it reads RSQATKGEHPQVTTEPCGPW.

The protein resides in the membrane. This chain is Transmembrane protein 89 (TMEM89), found in Homo sapiens (Human).